The chain runs to 192 residues: Adenylate kinase (192 aa).

10-18 (GVPGVGSTT) is an ATP binding site.

It belongs to the archaeal adenylate kinase family. Monomer.

It is found in the cytoplasm. The catalysed reaction is AMP + ATP = 2 ADP. This is Adenylate kinase (adkA) from Methanococcus voltae.